Consider the following 178-residue polypeptide: Large ribosomal subunit protein uL6 (178 aa).

Residues 155–169 (PYKGKGIKYDNEQIR) are compositionally biased toward basic and acidic residues. The tract at residues 155-178 (PYKGKGIKYDNEQIRRKAGKSGGK) is disordered.

The protein belongs to the universal ribosomal protein uL6 family. As to quaternary structure, part of the 50S ribosomal subunit.

Functionally, this protein binds to the 23S rRNA, and is important in its secondary structure. It is located near the subunit interface in the base of the L7/L12 stalk, and near the tRNA binding site of the peptidyltransferase center. This chain is Large ribosomal subunit protein uL6, found in Nitratidesulfovibrio vulgaris (strain DSM 19637 / Miyazaki F) (Desulfovibrio vulgaris).